Reading from the N-terminus, the 215-residue chain is Negative modulator of initiation of replication (215 aa).

A disordered region spans residues 71 to 93 (AETPKPSSEQEIRTPARKQSTQS). The interval 181–187 (NTNSGRK) is interaction with DNA.

This sequence belongs to the SeqA family. Homodimer. Polymerizes to form helical filaments.

The protein localises to the cytoplasm. Functionally, negative regulator of replication initiation, which contributes to regulation of DNA replication and ensures that replication initiation occurs exactly once per chromosome per cell cycle. Binds to pairs of hemimethylated GATC sequences in the oriC region, thus preventing assembly of replication proteins and re-initiation at newly replicated origins. Repression is relieved when the region becomes fully methylated. The sequence is that of Negative modulator of initiation of replication from Mannheimia succiniciproducens (strain KCTC 0769BP / MBEL55E).